Here is a 293-residue protein sequence, read N- to C-terminus: DNA repair protein RecO (293 aa).

The protein belongs to the RecO family.

In terms of biological role, involved in DNA repair and RecF pathway recombination. The protein is DNA repair protein RecO of Cyanothece sp. (strain PCC 7425 / ATCC 29141).